Here is a 256-residue protein sequence, read N- to C-terminus: Major prion protein (256 aa).

The first 24 residues, 1-24 (MVKSHIGSWILVLFVAMWSDVGLC), serve as a signal peptide directing secretion. Residues 25-233 (KKRPKPGGGW…ESQAYYQRGA (209 aa)) form an interaction with GRB2, ERI3 and SYN1 region. The disordered stretch occupies residues 28-110 (PKPGGGWNTG…QWNKPSKPKT (83 aa)). 5 repeat units span residues 54 to 62 (PQGAGGWGQ), 63 to 70 (PHGGGWGQ), 71 to 78 (PHGGGWGQ), 79 to 86 (PHGGGWGQ), and 87 to 95 (PHGGGGWGQ). Residues 54–95 (PQGAGGWGQPHGGGWGQPHGGGWGQPHGGGWGQPHGGGGWGQ) form a 5 X 8 AA tandem repeats of P-H-G-G-G-W-G-Q region. Over residues 56 to 97 (GAGGWGQPHGGGWGQPHGGGWGQPHGGGWGQPHGGGGWGQGG) the composition is skewed to gly residues. The Cu(2+) site is built by H64, G65, G66, H72, G73, G74, H80, G81, G82, H88, G90, and G91. A disulfide bridge links C182 with C217. N-linked (GlcNAc...) asparagine glycosylation is found at N184 and N200. A233 carries the GPI-anchor amidated alanine lipid modification. The propeptide at 234 to 256 (SVILFSSPPVILLISFLIFLIVG) is removed in mature form.

This sequence belongs to the prion family. As to quaternary structure, monomer and homodimer. Has a tendency to aggregate into amyloid fibrils containing a cross-beta spine, formed by a steric zipper of superposed beta-strands. Soluble oligomers may represent an intermediate stage on the path to fibril formation. Copper binding may promote oligomerization. Interacts with GRB2, APP, ERI3/PRNPIP and SYN1. Mislocalized cytosolically exposed PrP interacts with MGRN1; this interaction alters MGRN1 subcellular location and causes lysosomal enlargement. Interacts with KIAA1191.

It is found in the cell membrane. Its subcellular location is the golgi apparatus. Functionally, its primary physiological function is unclear. Has cytoprotective activity against internal or environmental stresses. May play a role in neuronal development and synaptic plasticity. May be required for neuronal myelin sheath maintenance. May play a role in iron uptake and iron homeostasis. Soluble oligomers are toxic to cultured neuroblastoma cells and induce apoptosis (in vitro). Association with GPC1 (via its heparan sulfate chains) targets PRNP to lipid rafts. Also provides Cu(2+) or Zn(2+) for the ascorbate-mediated GPC1 deaminase degradation of its heparan sulfate side chains. This is Major prion protein (PRNP) from Moschus chrysogaster (Alpine musk deer).